The chain runs to 429 residues: Phosphoribosylamine--glycine ligase (429 aa).

The region spanning Lys109–Asp316 is the ATP-grasp domain. Residue Val135–Ser196 participates in ATP binding. The segment at Ser212 to Pro235 is disordered. The span at Gln213–Thr223 shows a compositional bias: basic and acidic residues. Glu286 and Asn288 together coordinate Mg(2+).

The protein belongs to the GARS family. Mg(2+) serves as cofactor. The cofactor is Mn(2+).

It catalyses the reaction 5-phospho-beta-D-ribosylamine + glycine + ATP = N(1)-(5-phospho-beta-D-ribosyl)glycinamide + ADP + phosphate + H(+). The protein operates within purine metabolism; IMP biosynthesis via de novo pathway; N(1)-(5-phospho-D-ribosyl)glycinamide from 5-phospho-alpha-D-ribose 1-diphosphate: step 2/2. The chain is Phosphoribosylamine--glycine ligase from Vibrio parahaemolyticus serotype O3:K6 (strain RIMD 2210633).